Here is a 291-residue protein sequence, read N- to C-terminus: Elongation factor Ts (291 aa).

The interval 79 to 82 is involved in Mg(2+) ion dislocation from EF-Tu; the sequence is TDFV.

This sequence belongs to the EF-Ts family.

It is found in the cytoplasm. Associates with the EF-Tu.GDP complex and induces the exchange of GDP to GTP. It remains bound to the aminoacyl-tRNA.EF-Tu.GTP complex up to the GTP hydrolysis stage on the ribosome. This is Elongation factor Ts from Roseobacter denitrificans (strain ATCC 33942 / OCh 114) (Erythrobacter sp. (strain OCh 114)).